The sequence spans 162 residues: Cyclic pyranopterin monophosphate synthase (162 aa).

Substrate is bound by residues Met75 to His77 and Met115 to Glu116. The active site involves Asp130.

This sequence belongs to the MoaC family. As to quaternary structure, homohexamer; trimer of dimers.

The catalysed reaction is (8S)-3',8-cyclo-7,8-dihydroguanosine 5'-triphosphate = cyclic pyranopterin phosphate + diphosphate. Its pathway is cofactor biosynthesis; molybdopterin biosynthesis. Its function is as follows. Catalyzes the conversion of (8S)-3',8-cyclo-7,8-dihydroguanosine 5'-triphosphate to cyclic pyranopterin monophosphate (cPMP). This is Cyclic pyranopterin monophosphate synthase from Geobacillus thermodenitrificans (strain NG80-2).